The sequence spans 163 residues: Cyanate hydratase (163 aa).

Residues R103, E106, and S129 contribute to the active site.

The protein belongs to the cyanase family.

The catalysed reaction is cyanate + hydrogencarbonate + 3 H(+) = NH4(+) + 2 CO2. In terms of biological role, catalyzes the reaction of cyanate with bicarbonate to produce ammonia and carbon dioxide. This Ajellomyces capsulatus (strain G186AR / H82 / ATCC MYA-2454 / RMSCC 2432) (Darling's disease fungus) protein is Cyanate hydratase.